Reading from the N-terminus, the 541-residue chain is Nucleoporin NUP57 (541 aa).

Positions 1–13 are enriched in low complexity; it reads MFGFSGSNNGFGN. The segment at 1–261 is disordered; sequence MFGFSGSNNG…STGSNLQQQQ (261 aa). 2 FG repeats span residues 2 to 3 and 11 to 12; these read FG. Polar residues predominate over residues 19 to 36; sequence TGFSFGQNNNNTNTQPSA. 2 FXFG repeats span residues 21 to 24 and 39 to 42; these read FSFG and FGFG. FG repeat units lie at residues 56 to 57 and 65 to 66; these read FG. Over residues 58–72 the composition is skewed to polar residues; the sequence is ANQATNTFGSNQQSS. The GLFG 1 repeat unit spans residues 76-79; the sequence is GLFG. The span at 83–102 shows a compositional bias: low complexity; the sequence is ALGSLGSSSTTASGTTATGT. 4 GLFG repeats span residues 103–106, 120–123, 132–135, and 147–150; these read GLFG. The segment covering 105–116 has biased composition (polar residues); sequence FGQQTAQPQQST. Residues 125–146 are compositionally biased toward polar residues; sequence KPTTTTGGLFGNSAQNNSTTSG. The segment covering 153–172 has biased composition (polar residues); sequence VGSTGSLMGGNSTQNTSNMN. GLFG repeat units follow at residues 175-178, 190-193, 204-207, and 220-223; these read GLFG. A compositionally biased stretch (polar residues) spans 228-257; that stretch reads PQTNTAPGLGNTVSTQPSFAWSKPSTGSNL. Positions 398 to 425 form a coiled coil; that stretch reads ILKAQSRNVEIEKRILKLGTQLATLKNR.

It belongs to the nucleoporin GLFG family. In terms of assembly, component of the nuclear pore complex (NPC). NPC constitutes the exclusive means of nucleocytoplasmic transport. NPCs allow the passive diffusion of ions and small molecules and the active, nuclear transport receptor-mediated bidirectional transport of macromolecules such as proteins, RNAs, ribonucleoparticles (RNPs), and ribosomal subunits across the nuclear envelope. Due to its 8-fold rotational symmetry, all subunits are present with 8 copies or multiples thereof. NUP57 is part of the NUP57 subcomplex (NIC96, NSP1, NUP49, NUP57) interacting with NUP49 and NSP1. Interacts through its FG repeats with karyopherins.

Its subcellular location is the nucleus. The protein resides in the nuclear pore complex. The protein localises to the nucleus membrane. Functionally, functions as a component of the nuclear pore complex (NPC). NPC components, collectively referred to as nucleoporins (NUPs), can play the role of both NPC structural components and of docking or interaction partners for transiently associated nuclear transport factors. Active directional transport is assured by both, a Phe-Gly (FG) repeat affinity gradient for these transport factors across the NPC and a transport cofactor concentration gradient across the nuclear envelope (GSP1 and GSP2 GTPases associated predominantly with GTP in the nucleus, with GDP in the cytoplasm). NUP57 plays an important role in several nuclear transport pathways including poly(A)+ RNA, tRNA, and pre-ribosome transport. The sequence is that of Nucleoporin NUP57 (NUP57) from Saccharomyces cerevisiae (strain ATCC 204508 / S288c) (Baker's yeast).